Here is a 156-residue protein sequence, read N- to C-terminus: Small ribosomal subunit protein uS7 (156 aa).

The protein belongs to the universal ribosomal protein uS7 family. In terms of assembly, part of the 30S ribosomal subunit. Contacts proteins S9 and S11.

Its function is as follows. One of the primary rRNA binding proteins, it binds directly to 16S rRNA where it nucleates assembly of the head domain of the 30S subunit. Is located at the subunit interface close to the decoding center, probably blocks exit of the E-site tRNA. This chain is Small ribosomal subunit protein uS7, found in Sorangium cellulosum (strain So ce56) (Polyangium cellulosum (strain So ce56)).